The chain runs to 465 residues: UDP-N-acetylmuramate--L-alanine ligase (465 aa).

Gly125–Thr131 contacts ATP.

This sequence belongs to the MurCDEF family.

The protein resides in the cytoplasm. It carries out the reaction UDP-N-acetyl-alpha-D-muramate + L-alanine + ATP = UDP-N-acetyl-alpha-D-muramoyl-L-alanine + ADP + phosphate + H(+). It participates in cell wall biogenesis; peptidoglycan biosynthesis. Functionally, cell wall formation. The sequence is that of UDP-N-acetylmuramate--L-alanine ligase from Deinococcus geothermalis (strain DSM 11300 / CIP 105573 / AG-3a).